Consider the following 99-residue polypeptide: Plastocyanin (99 aa).

The Plastocyanin-like domain maps to 1 to 99 (VEILLGGEDG…AGMVGKVTVN (99 aa)). The Cu cation site is built by His-37, Cys-84, His-87, and Met-92.

Belongs to the plastocyanin family. Cu(2+) is required as a cofactor.

It localises to the plastid. The protein resides in the chloroplast thylakoid membrane. Its function is as follows. Participates in electron transfer between P700 and the cytochrome b6-f complex in photosystem I. This chain is Plastocyanin (PETE), found in Sambucus nigra (European elder).